Here is a 110-residue protein sequence, read N- to C-terminus: PHD finger-like domain-containing protein 5B (110 aa).

It belongs to the PHF5 family.

The chain is PHD finger-like domain-containing protein 5B from Arabidopsis thaliana (Mouse-ear cress).